The following is a 445-amino-acid chain: Disintegrin and metalloproteinase domain-containing protein 18 (445 aa).

Positions 1-106 (IYRKHLKYIG…LDMQCLGDLS (106 aa)) constitute a Peptidase M12B domain. Over 1 to 409 (IYRKHLKYIG…TKRLSQHADS (409 aa)) the chain is Extracellular. 3 cysteine pairs are disulfide-bonded: cysteine 18–cysteine 101, cysteine 60–cysteine 85, and cysteine 62–cysteine 67. N-linked (GlcNAc...) asparagine glycans are attached at residues asparagine 19 and asparagine 59. 2 N-linked (GlcNAc...) asparagine glycosylation sites follow: asparagine 84 and asparagine 131. The Disintegrin domain occupies 113–202 (QSVCGNGIVE…HCVPDTFALD (90 aa)). Cysteine 173 and cysteine 194 are oxidised to a cystine. N-linked (GlcNAc...) asparagine glycans are attached at residues asparagine 333 and asparagine 340. The EGF-like domain maps to 342–376 (TGNDCNAAKKCKGNGICNNFGHCQCFPDYRPPDCN). 3 disulfides stabilise this stretch: cysteine 346–cysteine 358, cysteine 352–cysteine 364, and cysteine 366–cysteine 375. A helical transmembrane segment spans residues 410–430 (WVILGFFIFLPFIMTLFLGII). Residues 431-445 (KRNERKIVPQKEQER) are Cytoplasmic-facing.

In terms of processing, the prodomain and the metalloprotease-like domain are cleaved during the epididymal maturation of the spermatozoa. As to expression, expressed specifically in testis.

Its subcellular location is the membrane. Its function is as follows. Sperm surface membrane protein that may be involved in spermatogenesis and fertilization. This is a non catalytic metalloprotease-like protein. This is Disintegrin and metalloproteinase domain-containing protein 18 (Adam18) from Rattus norvegicus (Rat).